The following is a 335-amino-acid chain: Phosphate acyltransferase (335 aa).

This sequence belongs to the PlsX family. Homodimer. Probably interacts with PlsY.

Its subcellular location is the cytoplasm. It catalyses the reaction a fatty acyl-[ACP] + phosphate = an acyl phosphate + holo-[ACP]. The protein operates within lipid metabolism; phospholipid metabolism. Catalyzes the reversible formation of acyl-phosphate (acyl-PO(4)) from acyl-[acyl-carrier-protein] (acyl-ACP). This enzyme utilizes acyl-ACP as fatty acyl donor, but not acyl-CoA. The protein is Phosphate acyltransferase of Clostridium botulinum (strain ATCC 19397 / Type A).